The sequence spans 294 residues: GTP cyclohydrolase FolE2 (294 aa).

Belongs to the GTP cyclohydrolase IV family.

The catalysed reaction is GTP + H2O = 7,8-dihydroneopterin 3'-triphosphate + formate + H(+). It participates in cofactor biosynthesis; 7,8-dihydroneopterin triphosphate biosynthesis; 7,8-dihydroneopterin triphosphate from GTP: step 1/1. Functionally, converts GTP to 7,8-dihydroneopterin triphosphate. The polypeptide is GTP cyclohydrolase FolE2 (Acinetobacter baylyi (strain ATCC 33305 / BD413 / ADP1)).